Here is a 465-residue protein sequence, read N- to C-terminus: Cysteine--tRNA ligase (465 aa).

Cysteine 27 lines the Zn(2+) pocket. Positions 29-39 (PTVYDDAHLGH) match the 'HIGH' region motif. Residues cysteine 207, histidine 237, and glutamate 241 each contribute to the Zn(2+) site. Residues 269–273 (KMSKS) carry the 'KMSKS' region motif. Residue lysine 272 coordinates ATP.

Belongs to the class-I aminoacyl-tRNA synthetase family. As to quaternary structure, monomer. The cofactor is Zn(2+).

It localises to the cytoplasm. The enzyme catalyses tRNA(Cys) + L-cysteine + ATP = L-cysteinyl-tRNA(Cys) + AMP + diphosphate. The protein is Cysteine--tRNA ligase (cysS) of Helicobacter pylori (strain ATCC 700392 / 26695) (Campylobacter pylori).